A 200-amino-acid polypeptide reads, in one-letter code: Eukaryotic translation initiation factor isoform 4E (200 aa).

MRNA is bound by residues 44–49 (QGVAWG), Lys76, and 94–95 (WE). A disulfide bond links Cys99 and Cys138. MRNA contacts are provided by residues 145-150 (RRSQDK) and 189-192 (KRER).

The protein belongs to the eukaryotic initiation factor 4E family. In terms of assembly, EIF4F is a multi-subunit complex, the composition of which varies with external and internal environmental conditions. It is composed of at least EIF4A, EIF4E and EIF4G. EIF4E is also known to interact with other partners. In higher plants two isoforms of EIF4F have been identified, named isoform EIF4F and isoform EIF(iso)4F. Isoform EIF4F has subunits p220 and p26, whereas isoform EIF(iso)4F has subunits p82 and p28. As to quaternary structure, (Microbial infection) Interacts with viral genome-linked protein (VPg); this interaction is possible in susceptible hosts but impaired in resistant plants. In terms of processing, according to the redox status, the Cys-99-Cys-138 disulfide bridge may have a role in regulating protein function by affecting its ability to bind capped mRNA. In terms of tissue distribution, mostly expressed in roots and leaves, and, to a lower extent, in stems, flowers and immature green fruits.

It is found in the cytoplasm. The protein localises to the nucleus. Component of the protein complex eIF4F, which is involved in the recognition of the mRNA cap, ATP-dependent unwinding of 5'-terminal secondary structure and recruitment of mRNA to the ribosome. Recognizes and binds the 7-methylguanosine-containing mRNA cap during an early step in the initiation of protein synthesis and facilitates ribosome binding by inducing the unwinding of the mRNAs secondary structures. Key component of recessive resistance to potyviruses. Functionally, (Microbial infection) Susceptibility host factor required for viral infection by recruiting viral RNAs to the host ribosomal complex via an interaction with viral genome-linked protein (VPg). The chain is Eukaryotic translation initiation factor isoform 4E from Solanum lycopersicum (Tomato).